An 883-amino-acid polypeptide reads, in one-letter code: Translation initiation factor IF-2 (883 aa).

Residues 1 to 259 (MVDTKTPGDK…GASKQRGRLT (259 aa)) are disordered. Low complexity-rich tracts occupy residues 10–22 (KTLT…LTLK) and 77–89 (PRQQ…PQQS). Over residues 113–184 (ARVREIEERK…GDAEPAKKPA (72 aa)) the composition is skewed to basic and acidic residues. The span at 185–218 (ETSTTTTTAAPARPATTTTRTPTPAGRPPAVAAE) shows a compositional bias: low complexity. Residues 235–244 (PARPAPPPKQ) show a composition bias toward pro residues. Residues 379–548 (PRSPVVTVMG…MIALQAEILE (170 aa)) enclose the tr-type G domain. Positions 388–395 (GHVDHGKT) are G1. 388–395 (GHVDHGKT) serves as a coordination point for GTP. The G2 stretch occupies residues 413-417 (GITQH). Positions 436–439 (DTPG) are G3. GTP is bound by residues 436-440 (DTPGH) and 490-493 (NKID). The segment at 490–493 (NKID) is G4. Residues 526–528 (SAK) form a G5 region.

This sequence belongs to the TRAFAC class translation factor GTPase superfamily. Classic translation factor GTPase family. IF-2 subfamily.

The protein localises to the cytoplasm. One of the essential components for the initiation of protein synthesis. Protects formylmethionyl-tRNA from spontaneous hydrolysis and promotes its binding to the 30S ribosomal subunits. Also involved in the hydrolysis of GTP during the formation of the 70S ribosomal complex. This Rhodopseudomonas palustris (strain ATCC BAA-98 / CGA009) protein is Translation initiation factor IF-2.